The sequence spans 212 residues: Uracil phosphoribosyltransferase (212 aa).

5-phospho-alpha-D-ribose 1-diphosphate-binding positions include arginine 78, arginine 103, and 130 to 138 (DPMLATGGS). Residues isoleucine 193 and 198–200 (GDA) each bind uracil. A 5-phospho-alpha-D-ribose 1-diphosphate-binding site is contributed by aspartate 199.

This sequence belongs to the UPRTase family. Mg(2+) serves as cofactor.

It catalyses the reaction UMP + diphosphate = 5-phospho-alpha-D-ribose 1-diphosphate + uracil. The protein operates within pyrimidine metabolism; UMP biosynthesis via salvage pathway; UMP from uracil: step 1/1. Allosterically activated by GTP. Its function is as follows. Catalyzes the conversion of uracil and 5-phospho-alpha-D-ribose 1-diphosphate (PRPP) to UMP and diphosphate. This chain is Uracil phosphoribosyltransferase, found in Pseudomonas aeruginosa (strain LESB58).